Here is a 410-residue protein sequence, read N- to C-terminus: Angiopoietin-related protein 4 (410 aa).

An N-terminal signal peptide occupies residues methionine 1–alanine 23. The segment at lysine 81–proline 106 is disordered. Residues glutamate 107–alanine 155 adopt a coiled-coil conformation. N-linked (GlcNAc...) asparagine glycosylation occurs at asparagine 184. A Fibrinogen C-terminal domain is found at serine 186–alanine 408. 2 cysteine pairs are disulfide-bonded: cysteine 195-cysteine 223 and cysteine 348-cysteine 361.

As to quaternary structure, homooligomer; disulfide-linked via Cys residues in the N-terminal part of the protein. The homooligomer undergoes proteolytic processing to release the ANGPTL4 C-terminal chain, which circulates as a monomer. The homooligomer unprocessed form is able to interact with the extracellular matrix. Post-translationally, N-glycosylated. Forms disulfide-linked dimers and tetramers. In terms of processing, cleaved into a smaller N-terminal chain and a larger chain that contains the fibrinogen C-terminal domain; both cleaved and uncleaved forms are detected in the extracellular space. The cleaved form is not present within the cell.

Its subcellular location is the secreted. It is found in the extracellular space. It localises to the extracellular matrix. In terms of biological role, mediates inactivation of the lipoprotein lipase LPL, and thereby plays a role in the regulation of triglyceride clearance from the blood serum and in lipid metabolism. May also play a role in regulating glucose homeostasis and insulin sensitivity. Inhibits proliferation, migration, and tubule formation of endothelial cells and reduces vascular leakage. Upon heterologous expression, inhibits the adhesion of endothelial cell to the extracellular matrix (ECM), and inhibits the reorganization of the actin cytoskeleton, formation of actin stress fibers and focal adhesions in endothelial cells that have adhered to ANGPTL4-containing ECM (in vitro). Depending on context, may modulate tumor-related angiogenesis. Mediates inactivation of the lipoprotein lipase LPL, and thereby plays an important role in the regulation of triglyceride clearance from the blood serum and in lipid metabolism. Has higher activity in LPL inactivation than the uncleaved protein. This Bos taurus (Bovine) protein is Angiopoietin-related protein 4 (ANGPTL4).